A 597-amino-acid chain; its full sequence is K(+) efflux antiporter 6 (597 aa).

An N-terminal signal peptide occupies residues 1 to 35; sequence MVEGRRRRRFSLSSQQLALLLLLLSFFLCFSVASP. Helical transmembrane passes span 177–197, 201–221, 224–244, 257–277, 287–307, 321–341, 351–371, 396–416, 440–460, 461–481, 499–519, and 543–563; these read LISD…AFAC, PVIT…LNFI, MVQV…ALGL, VAVL…GITV, GVFV…KFLM, IGIL…LPVL, MLSI…LSIL, LAAV…GLSL, IEPI…MLVN, VHFL…VIII, TALL…VLLS, and LVTT…GILL.

This sequence belongs to the monovalent cation:proton antiporter 2 (CPA2) transporter (TC 2.A.37) family. KEA (TC 2.A.37.1) subfamily. In terms of tissue distribution, expressed in roots, stems, leaves, flowers and silique.

The protein localises to the golgi apparatus membrane. Its subcellular location is the golgi apparatus. It is found in the trans-Golgi network membrane. The protein resides in the prevacuolar compartment membrane. It localises to the endomembrane system. It carries out the reaction K(+)(in) + H(+)(out) = K(+)(out) + H(+)(in). Its function is as follows. Electroneutral K(+)/H(+) efflux antiporter involved in K(+) homeostasis and osmotic adjustment. Together with KEA4 and KEA5, promotes growth and development, and facilitates endosomal pH and ions homeostasis, as well as salt tolerance (e.g. K(+), NaCl and LiCl), probably by supporting cell wall biosynthesis during rapid etiolated seedling growth. The protein is K(+) efflux antiporter 6 of Arabidopsis thaliana (Mouse-ear cress).